We begin with the raw amino-acid sequence, 1325 residues long: Nonribosomal peptide synthetase (1325 aa).

The interval 248 to 644 is adenylation; it reads YQQLDRLSTR…LGEIEYQIQQ (397 aa). A Carrier domain is found at 779–856; sequence EIVNPGEITL…DQARLLRPLS (78 aa). Ser-816 is subject to O-(pantetheine 4'-phosphoryl)serine. A condensation region spans residues 893-1310; the sequence is EDVYPCTPLQ…DDYSTTLHTL (418 aa).

This sequence belongs to the NRP synthetase family. The cofactor is pantetheine 4'-phosphate.

Its pathway is antifungal biosynthesis. In terms of biological role, nonribosomal peptide synthetase; part of the gene cluster that mediates the biosynthesis of the tetrahydropyranyl antifungal agent lanomycin that acts as an inhibitor of CYP51 and blocks the ergosterol biosynthesis. The biosynthesis probably begins with the formation of an hexaketide, followed by methionine mediated alkylation of C-2 and C-6, and methylation of the reduced C-3 oxygen, pyran forming reductive ring closure, oxygenation of C-4, beta-keto reduction, enoyl reduction and dehydration of the remaining oxygens, and finally, acylation with glycine to complete the biosynthesis. The sequence is that of Nonribosomal peptide synthetase from Pyrenophora dematioidea (Helminthosporium dematioideum).